We begin with the raw amino-acid sequence, 287 residues long: Glutamate racemase (287 aa).

Residues 32–33 and 64–65 contribute to the substrate site; these read DS and YG. The Proton donor/acceptor role is filled by C96. 97–98 is a binding site for substrate; the sequence is NT. The active-site Proton donor/acceptor is the C208. 209–210 contributes to the substrate binding site; sequence TH.

It belongs to the aspartate/glutamate racemases family.

It catalyses the reaction L-glutamate = D-glutamate. The protein operates within cell wall biogenesis; peptidoglycan biosynthesis. Its function is as follows. Provides the (R)-glutamate required for cell wall biosynthesis. The chain is Glutamate racemase from Serratia proteamaculans (strain 568).